We begin with the raw amino-acid sequence, 3172 residues long: Erythronolide synthase EryA3 (3172 aa).

In terms of domain architecture, Ketosynthase family 3 (KS3) 1 spans 38-452 (GEPIAIVGMA…GTNAHVIVEE (415 aa)). Module stretches follow at residues 41-1464 (IAIV…DHYL) and 1492-2891 (IAIV…DHIG). Cys-199 acts as the Acyl-thioester intermediate; for beta-ketoacyl synthase 1 activity in catalysis. Active-site for beta-ketoacyl synthase 1 activity residues include His-334 and His-374. The tract at residues 557 to 874 (VFPGQGAQWQ…LGEAYAQGVE (318 aa)) is acyltransferase 1. Ser-643 acts as the Acyl-ester intermediate; for acyltransferase 1 activity in catalysis. Residues 1117 to 1294 (GTVLVTGGTG…VTSIAWGLWA (178 aa)) are beta-ketoacyl reductase 1. NADP(+)-binding positions include 1125 to 1128 (TGGI), 1148 to 1151 (GRRG), 1177 to 1178 (DV), Lys-1229, and 1249 to 1250 (FS). Tyr-1264 functions as the Acyl-ester intermediate; for beta-ketoacyl reductase 1 activity in the catalytic mechanism. The region spanning 1392–1467 (EHLAHLIRAE…RLADHYLERL (76 aa)) is the Carrier 1 domain. Ser-1427 carries the post-translational modification O-(pantetheine 4'-phosphoryl)serine. In terms of domain architecture, Ketosynthase family 3 (KS3) 2 spans 1489–1916 (DDPIAIVGMA…GTNAHVIIAE (428 aa)). Cys-1661 (acyl-thioester intermediate; for beta-ketoacyl synthase 2 activity) is an active-site residue. Residues His-1797 and His-1837 each act as for beta-ketoacyl synthase 2 activity in the active site. An acyltransferase 2 region spans residues 2022–2331 (VFVFPGQGAQ…LARAHVHGVA (310 aa)). Catalysis depends on Ser-2112, which acts as the Acyl-ester intermediate; for acyltransferase 2 activity. Positions 2557 to 2731 (GTALVTGGTG…ATSVAWGAWA (175 aa)) are beta-ketoacyl reductase 2. NADP(+)-binding positions include 2565–2568 (TGAL), 2588–2591 (SRRG), 2617–2618 (DV), Lys-2666, and 2686–2687 (FS). Tyr-2701 acts as the Acyl-ester intermediate; for beta-ketoacyl reductase 2 activity in catalysis. The Carrier 2 domain maps to 2819 to 2894 (QELLEFTHSH…RLADHIGQQL (76 aa)). Ser-2854 carries the post-translational modification O-(pantetheine 4'-phosphoryl)serine. A thioesterase region spans residues 2960-3166 (ICCAGTAAIS…DAIARHIDAW (207 aa)). Residue Thr-2965 coordinates substrate. The Nucleophile; for thioesterase activity role is filled by Ser-3031. Ala-3032 and Asp-3058 together coordinate substrate. The active-site Proton acceptor; for thioesterase activity is the His-3148.

As to quaternary structure, homodimer. Erythronolide synthase is composed of EryAI, EryAII and EryAIII multimodular (2 modules) polypeptides each coding for a functional synthase subunit which participates in 2 of the six FAS-like elongation steps required for formation of the polyketide. Module 1, 2, 3, 4, 5, and 6 participating in biosynthesis steps 1, 2, 3, 4, 5, and 6, respectively. The cofactor is pantetheine 4'-phosphate.

It catalyses the reaction 6 (S)-methylmalonyl-CoA + propanoyl-CoA + 6 NADPH + 12 H(+) = 6-deoxyerythronolide B + 6 CO2 + 6 NADP(+) + 7 CoA + H2O. Its pathway is antibiotic biosynthesis; erythromycin biosynthesis. Its activity is regulated as follows. Inhibited by diphenyl phosphonates derivatives such as diphenyl allylphosphonate. Its function is as follows. Involved in the biosynthesis of antibiotic erythromycin via the biosynthesis of its aglycone precursor, 6-deoxyerythronolide B (6-dEB). The polypeptide is Erythronolide synthase EryA3 (Saccharopolyspora erythraea (Streptomyces erythraeus)).